The following is a 390-amino-acid chain: Exodeoxyribonuclease 7 large subunit (390 aa).

This sequence belongs to the XseA family. Heterooligomer composed of large and small subunits.

It localises to the cytoplasm. The catalysed reaction is Exonucleolytic cleavage in either 5'- to 3'- or 3'- to 5'-direction to yield nucleoside 5'-phosphates.. Its function is as follows. Bidirectionally degrades single-stranded DNA into large acid-insoluble oligonucleotides, which are then degraded further into small acid-soluble oligonucleotides. This Synechococcus sp. (strain CC9311) protein is Exodeoxyribonuclease 7 large subunit.